Reading from the N-terminus, the 69-residue chain is uncharacterized protein (69 aa).

Residues 23 to 46 (AENEGNRKENRRQMQSRNERGCNV) form a disordered region. The span at 26-44 (EGNRKENRRQMQSRNERGC) shows a compositional bias: basic and acidic residues.

This is an uncharacterized protein from Homo sapiens (Human).